We begin with the raw amino-acid sequence, 102 residues long: NADH-quinone oxidoreductase subunit K 1 (102 aa).

3 helical membrane passes run 5 to 25 (LLHV…CVLV), 30 to 50 (IIMM…AFVG), and 62 to 82 (VFAL…LALV).

Belongs to the complex I subunit 4L family. As to quaternary structure, NDH-1 is composed of 14 different subunits. Subunits NuoA, H, J, K, L, M, N constitute the membrane sector of the complex.

The protein resides in the cell inner membrane. The enzyme catalyses a quinone + NADH + 5 H(+)(in) = a quinol + NAD(+) + 4 H(+)(out). Its function is as follows. NDH-1 shuttles electrons from NADH, via FMN and iron-sulfur (Fe-S) centers, to quinones in the respiratory chain. The immediate electron acceptor for the enzyme in this species is believed to be ubiquinone. Couples the redox reaction to proton translocation (for every two electrons transferred, four hydrogen ions are translocated across the cytoplasmic membrane), and thus conserves the redox energy in a proton gradient. The chain is NADH-quinone oxidoreductase subunit K 1 from Geotalea uraniireducens (strain Rf4) (Geobacter uraniireducens).